The primary structure comprises 402 residues: Putative polyketide beta-ketoacyl synthase 2 (402 aa).

2 disordered regions span residues 1–30 (MTPV…WAPR) and 188–222 (VEPR…FDRD). A Ketosynthase family 3 (KS3) domain is found at 1–400 (MTPVAVTGMG…GFNSALVVRA (400 aa)). The segment covering 192 to 205 (SAPGAGSPSSPAGG) has biased composition (low complexity).

The protein belongs to the thiolase-like superfamily. Beta-ketoacyl-ACP synthases family.

It functions in the pathway antifungal biosynthesis; monensin biosynthesis. The polypeptide is Putative polyketide beta-ketoacyl synthase 2 (Streptomyces virginiae (Streptomyces cinnamonensis)).